We begin with the raw amino-acid sequence, 312 residues long: Cytochrome c biogenesis protein CcsA (312 aa).

A run of 8 helical transmembrane segments spans residues 18 to 38, 48 to 68, 73 to 93, 102 to 122, 148 to 168, 216 to 236, 250 to 267, and 279 to 299; these read LGIL…LALF, FFTI…WILS, ISNL…GQLL, IIPV…CFVL, VMLS…VLFI, SILV…IWAN, TWAF…HMRI, and FATS…FLGI.

This sequence belongs to the CcmF/CycK/Ccl1/NrfE/CcsA family. In terms of assembly, may interact with ccs1.

It is found in the cellular thylakoid membrane. Functionally, required during biogenesis of c-type cytochromes (cytochrome c6 and cytochrome f) at the step of heme attachment. The protein is Cytochrome c biogenesis protein CcsA of Prochlorococcus marinus (strain MIT 9515).